The following is a 94-amino-acid chain: Small ribosomal subunit protein bS18 (94 aa).

The segment covering M1–R11 has biased composition (polar residues). Residues M1 to R24 form a disordered region.

This sequence belongs to the bacterial ribosomal protein bS18 family. As to quaternary structure, part of the 30S ribosomal subunit. Forms a tight heterodimer with protein bS6.

Binds as a heterodimer with protein bS6 to the central domain of the 16S rRNA, where it helps stabilize the platform of the 30S subunit. The sequence is that of Small ribosomal subunit protein bS18 from Pelobacter propionicus (strain DSM 2379 / NBRC 103807 / OttBd1).